Consider the following 523-residue polypeptide: MSLQTNHRPVLVVDFGAQYAQLIARRVREAGIYSEVIPHTATADDVRAKNAAALVLSGGPSSVYAEGAPSLDAEILDLGLPVFGICYGFQAMTHALGGTVANTGKREYGRTDINVAGGVLHEGLEACHKVWMSHGDAVSEAPEGFVVTASSEGAPVAAFENKERKMAGVQYHPEVLHSPHGQAVLTRFLTEIAGLEQNWTAANIAEELIEKVREQIGEDGRAICGLSGGVDSAVAGALVQRAIGDRLTCVFVDHGLLRAGEREQVEKDFVAATGAKLVTVDERQAFLSKLAGVTEPEAKRKAIGAEFIRSFERAVAGVLEEAPEGSTVDFLVQGTLYPDVVESGGGSGTANIKSHHNVGGLPDDVEFKLVEPLRDLFKDEVRAVGRELGLPEEIVGRQPFPGPGLGIRIIGEVTEDRLETLRHADLIARTELTEAGLDGVIWQCPVVLLADVRSVGVQGDGRTYGHPIVLRPVSSEDAMTADWTRLPYEVLEKISTRITNEVPDVNRVVLDVTSKPPGTIEWE.

The region spanning 9–198 (PVLVVDFGAQ…LTEIAGLEQN (190 aa)) is the Glutamine amidotransferase type-1 domain. Catalysis depends on Cys-86, which acts as the Nucleophile. Residues His-172 and Glu-174 contribute to the active site. The 199-residue stretch at 199-397 (WTAANIAEEL…LGLPEEIVGR (199 aa)) folds into the GMPS ATP-PPase domain. 227 to 233 (SGGVDSA) serves as a coordination point for ATP.

Homodimer.

The catalysed reaction is XMP + L-glutamine + ATP + H2O = GMP + L-glutamate + AMP + diphosphate + 2 H(+). Its pathway is purine metabolism; GMP biosynthesis; GMP from XMP (L-Gln route): step 1/1. Its function is as follows. Catalyzes the synthesis of GMP from XMP. The protein is GMP synthase [glutamine-hydrolyzing] of Corynebacterium glutamicum (strain ATCC 13032 / DSM 20300 / JCM 1318 / BCRC 11384 / CCUG 27702 / LMG 3730 / NBRC 12168 / NCIMB 10025 / NRRL B-2784 / 534).